Consider the following 304-residue polypeptide: Probable solute-binding protein AdeT1 (304 aa).

Belongs to the bacterial solute-binding protein 7 family.

In terms of biological role, mediates antimicrobial resistance via active efflux. Contributes to resistance to antibiotics such as chloramphenicol, erythromycin and novobiocin. May be part of a tripartite ATP-independent periplasmic (TRAP) transport system. The sequence is that of Probable solute-binding protein AdeT1 from Acinetobacter baumannii.